The chain runs to 92 residues: Small ribosomal subunit protein bS20 (92 aa).

This sequence belongs to the bacterial ribosomal protein bS20 family.

Binds directly to 16S ribosomal RNA. The sequence is that of Small ribosomal subunit protein bS20 from Rickettsia africae (strain ESF-5).